Consider the following 373-residue polypeptide: Putative C-P lyase subunit protein HtxH (373 aa).

The protein belongs to the PhnI family.

Functionally, belongs to an operon involved in hypophosphite oxidation. Exact function not known. The sequence is that of Putative C-P lyase subunit protein HtxH (htxH) from Stutzerimonas stutzeri (Pseudomonas stutzeri).